Reading from the N-terminus, the 98-residue chain is NADH-ubiquinone oxidoreductase chain 4L (98 aa).

3 consecutive transmembrane segments (helical) span residues 2 to 22 (PSIS…MLMF), 29 to 49 (SLLC…LIIL), and 61 to 81 (ILLL…LVMI).

It belongs to the complex I subunit 4L family. In terms of assembly, core subunit of respiratory chain NADH dehydrogenase (Complex I) which is composed of 45 different subunits.

The protein localises to the mitochondrion inner membrane. It carries out the reaction a ubiquinone + NADH + 5 H(+)(in) = a ubiquinol + NAD(+) + 4 H(+)(out). Its function is as follows. Core subunit of the mitochondrial membrane respiratory chain NADH dehydrogenase (Complex I) which catalyzes electron transfer from NADH through the respiratory chain, using ubiquinone as an electron acceptor. Part of the enzyme membrane arm which is embedded in the lipid bilayer and involved in proton translocation. The chain is NADH-ubiquinone oxidoreductase chain 4L (MT-ND4L) from Mirza coquereli (Coquerel's giant mouse lemur).